The primary structure comprises 573 residues: 3-(3-hydroxy-phenyl)propionate/3-hydroxycinnamic acid hydroxylase (573 aa).

FAD is bound by residues 18-47 (DVVIVGAGPVGLTLANILGLQGVRTMIVEE) and 283-293 (FRKGRMFLAGD).

This sequence belongs to the PheA/TfdB FAD monooxygenase family. It depends on FAD as a cofactor.

The catalysed reaction is 3-(3-hydroxyphenyl)propanoate + NADH + O2 + H(+) = 3-(2,3-dihydroxyphenyl)propanoate + NAD(+) + H2O. It carries out the reaction (2E)-3-(3-hydroxyphenyl)prop-2-enoate + NADH + O2 + H(+) = (2E)-3-(2,3-dihydroxyphenyl)prop-2-enoate + NAD(+) + H2O. It functions in the pathway aromatic compound metabolism; 3-phenylpropanoate degradation. In terms of biological role, catalyzes the insertion of one atom of molecular oxygen into position 2 of the phenyl ring of 3-(3-hydroxyphenyl)propionate (3-HPP) and hydroxycinnamic acid (3HCI). This chain is 3-(3-hydroxy-phenyl)propionate/3-hydroxycinnamic acid hydroxylase, found in Mycobacterium sp. (strain KMS).